The primary structure comprises 367 residues: Voltage-gated potassium channel subunit beta-2 (367 aa).

3 positions are modified to phosphoserine: serine 9, serine 14, and serine 20. Asymmetric dimethylarginine; alternate is present on arginine 28. Arginine 28 carries the post-translational modification Omega-N-methylarginine; alternate. At serine 31 the chain carries Phosphoserine. NADP(+) contacts are provided by threonine 56, tryptophan 57, glutamine 63, and aspartate 85. Tyrosine 90 functions as the Proton donor/acceptor in the catalytic mechanism. At serine 112 the chain carries Phosphoserine. Lysine 124 is subject to N6-acetyllysine. NADP(+) is bound by residues asparagine 158, serine 188, arginine 189, glutamine 214, tryptophan 243, serine 244, proline 245, leucine 246, alanine 247, cysteine 248, lysine 254, tyrosine 262, arginine 264, glycine 323, serine 325, glutamine 329, glutamate 332, and asparagine 333.

The protein belongs to the shaker potassium channel beta subunit family. In terms of assembly, homotetramer. Interaction with tetrameric potassium channel alpha subunits gives rise to a heterooctamer. Identified in potassium channel complexes containing KCNA1, KCNA2, KCNA4, KCNA5, KCNA6, KCNAB1, KCNAB2 and KCND3. Interacts (in unphosphorylated form) with MAPRE1. Forms a ternary complex with SQSTM1 and PRKCZ. Phosphorylated by PRKCZ; may be regulated by incorporation in a complex composed of PRKCZ and SQSTM1. As to expression, detected in the juxtaparanodal region of nodes of Ranvier in myelinated nerve fibers in the spinal cord (at protein level).

It localises to the cytoplasm. The protein localises to the membrane. It is found in the cell membrane. Its subcellular location is the cell projection. The protein resides in the axon. It localises to the synapse. The protein localises to the synaptosome. It is found in the cytoskeleton. It carries out the reaction hydroxyacetone + NADP(+) = methylglyoxal + NADPH + H(+). It catalyses the reaction (E)-4-oxonon-2-en-1-ol + NADP(+) = (E)-4-oxonon-2-enal + NADPH + H(+). Its function is as follows. Regulatory subunit of the voltage-gated potassium (Kv) Shaker channels composed of pore-forming and potassium-conducting alpha subunits and of regulatory beta subunits. The beta-2/KCNAB2 cytoplasmic subunit promotes potassium channel closure via a mechanism that does not involve physical obstruction of the channel pore. Promotes the inactivation of Kv1.4/KCNA4 and Kv1.5/KCNA5 alpha subunit-containing channels. Displays nicotinamide adenine dinucleotide phosphate (NADPH)-dependent aldoketoreductase activity by catalyzing the NADPH-dependent reduction of a wide range of aldehyde and ketone substrates. Substrate specificity includes methylglyoxal, 9,10-phenanthrenequinone, prostaglandin J2, 4-nitrobenzaldehyde, 4-nitroacetophenone and 4-oxo-trans-2-nonenal (in vitro, no physiological substrate identified yet). The binding of oxidized and reduced nucleotide alters Kv channel gating and may contribute to dynamic fine tuning of cell excitability. Contributes to the regulation of nerve signaling, and prevents neuronal hyperexcitability. The polypeptide is Voltage-gated potassium channel subunit beta-2 (KCNAB2) (Bos taurus (Bovine)).